The primary structure comprises 509 residues: Meiotic fizzy-related protein 2 (509 aa).

WD repeat units lie at residues 159 to 196 (LDDF…SIME), 199 to 238 (PTTY…NRCD), 242 to 281 (HHDG…MRRV), 287 to 326 (VHQE…NKKF), 329 to 371 (IHLA…RIHS), and 437 to 477 (IHTH…QEIH).

It belongs to the WD repeat CDC20/Fizzy family.

The protein localises to the nucleus. Functionally, has a role in meiosis. This Schizosaccharomyces pombe (strain 972 / ATCC 24843) (Fission yeast) protein is Meiotic fizzy-related protein 2 (mfr2).